The chain runs to 230 residues: UPF0702 transmembrane protein YcaP (230 aa).

A run of 3 helical transmembrane segments spans residues 16–36 (FDFLGEVALRSLYTFVLVFLF), 48–68 (MSLFEVLIILTLGSAAGDVAF), and 75–95 (VPVLIVFITLALLYRLVMWLM).

Belongs to the UPF0702 family.

It localises to the cell membrane. The sequence is that of UPF0702 transmembrane protein YcaP (ycaP) from Escherichia coli (strain K12).